Consider the following 421-residue polypeptide: MSAYSMLSERIAMAKELIKRAESLSRSKKGGIEGGAKLCSKLKSELKFLQKIESGKVAIKESHLQSTNLTHLKAIVESAENLEEVVSVLRVFGYTDSLGEKQTLVVDVVANGGHTWVKAIGRKAEALHNIWLGRGQYGDKSIIEQAEDFLQASRQQPVQYSNPHIVFAFYNSVSSPMADKLKDMGISVRGDIVAVNSLLNHPEEYLLSESESDDEGQELLQVTRVDLDNVLARVAFPTEIKVDVCRRVNLDITTLITYVSAMSYGGCHFIFKEKVLTEQAEQERKERVLPQLEAFMKDKELFACESAVKDFQSILDTLGGPGERERAAVLIKRINVVPDQPSERALKLVASSKINSRSLTIFGTGDTLKAITMTANSGFVRAANNQGVKFSVFIHQPRALTESKEALAVPLPKARTNDSAH.

The protein belongs to the UPF0415 family.

The sequence is that of UPF0415 protein C7orf25 homolog from Rattus norvegicus (Rat).